A 337-amino-acid chain; its full sequence is tRNA N6-adenosine threonylcarbamoyltransferase (337 aa).

The Fe cation site is built by H110 and H114. Residues 132–136 (VVSGG), D165, G178, D182, and N268 each bind substrate. Fe cation is bound at residue D293.

Belongs to the KAE1 / TsaD family. The cofactor is Fe(2+).

The protein resides in the cytoplasm. It carries out the reaction L-threonylcarbamoyladenylate + adenosine(37) in tRNA = N(6)-L-threonylcarbamoyladenosine(37) in tRNA + AMP + H(+). In terms of biological role, required for the formation of a threonylcarbamoyl group on adenosine at position 37 (t(6)A37) in tRNAs that read codons beginning with adenine. Is involved in the transfer of the threonylcarbamoyl moiety of threonylcarbamoyl-AMP (TC-AMP) to the N6 group of A37, together with TsaE and TsaB. TsaD likely plays a direct catalytic role in this reaction. This chain is tRNA N6-adenosine threonylcarbamoyltransferase, found in Sulfurihydrogenibium sp. (strain YO3AOP1).